The chain runs to 228 residues: Nuclear phosphoprotein UL3 homolog (228 aa).

Belongs to the alphaherpesvirinae HHV-1 UL3 family. Phosphorylated.

It localises to the host nucleus. The sequence is that of Nuclear phosphoprotein UL3 homolog (MDV015) from Gallus gallus (Chicken).